A 253-amino-acid polypeptide reads, in one-letter code: MPAVWPPRTVIRKSSGLRTLESALYRAGLGPVAGVDEVGRGACAGPLVVAACILGPNRLESLSALDDSKKLNESERERLFPLIRRYAVAFHVVFIPSVEVDRRGVHVANIEGMRRAVAGLAVRPGYVLSDGFRVPGLPMPSLPVVGGDAAAACIAAASVLAKVSRDRLMVAMDQEHPGYGFADHKGYSTRAHSAALNDLGPSTQHRFSFINVRRLVVDGEPGQGGELECGKLAVDVPVDMPVDRVLREGQLSR.

The region spanning 30 to 221 (GPVAGVDEVG…VRRLVVDGEP (192 aa)) is the RNase H type-2 domain. Residues D36, E37, and D130 each contribute to the a divalent metal cation site.

The protein belongs to the RNase HII family. Mn(2+) is required as a cofactor. The cofactor is Mg(2+).

The protein localises to the cytoplasm. The catalysed reaction is Endonucleolytic cleavage to 5'-phosphomonoester.. Its function is as follows. Endonuclease that specifically degrades the RNA of RNA-DNA hybrids. The sequence is that of Ribonuclease HII from Mycolicibacterium gilvum (strain PYR-GCK) (Mycobacterium gilvum (strain PYR-GCK)).